Reading from the N-terminus, the 69-residue chain is Large ribosomal subunit protein bL31 (69 aa).

Positions 16, 18, 37, and 40 each coordinate Zn(2+).

Belongs to the bacterial ribosomal protein bL31 family. Type A subfamily. Part of the 50S ribosomal subunit. The cofactor is Zn(2+).

In terms of biological role, binds the 23S rRNA. This is Large ribosomal subunit protein bL31 from Buchnera aphidicola subsp. Baizongia pistaciae (strain Bp).